A 1047-amino-acid chain; its full sequence is Ribonucleoside-diphosphate reductase subunit alpha (1047 aa).

ATP-cone domains follow at residues 9–111 (CTIV…KAHR), 118–219 (LSVV…ARVR), and 237–327 (VEVL…EALG). Residues Thr442, 457–458 (SC), Gly486, 670–674 (NLCTE), and 857–861 (PTATI) contribute to the substrate site. Cys458 and Cys687 are disulfide-bonded. Asn670 functions as the Proton acceptor in the catalytic mechanism. The Cysteine radical intermediate role is filled by Cys672. Glu674 functions as the Proton acceptor in the catalytic mechanism.

It belongs to the ribonucleoside diphosphate reductase large chain family. In terms of assembly, tetramer of two alpha and two beta subunits.

The catalysed reaction is a 2'-deoxyribonucleoside 5'-diphosphate + [thioredoxin]-disulfide + H2O = a ribonucleoside 5'-diphosphate + [thioredoxin]-dithiol. With respect to regulation, under complex allosteric control mediated by deoxynucleoside triphosphates and ATP binding. The type of nucleotide bound at the specificity site determines substrate preference. It seems probable that ATP makes the enzyme reduce CDP and UDP, dGTP favors ADP reduction and dTTP favors GDP reduction. Its function is as follows. Provides the precursors necessary for DNA synthesis. Catalyzes the biosynthesis of deoxyribonucleotides from the corresponding ribonucleotides. In Chlamydia trachomatis serovar D (strain ATCC VR-885 / DSM 19411 / UW-3/Cx), this protein is Ribonucleoside-diphosphate reductase subunit alpha (nrdA).